Reading from the N-terminus, the 266-residue chain is Vitamin B12-binding protein (266 aa).

The signal sequence occupies residues 1–22; sequence MAKQMFRALGALLLTLPVWLYA. Residues 25 to 266 form the Fe/B12 periplasmic-binding domain; that stretch reads RVITLSPANT…QLCNALSQVN (242 aa). Residues Y50 and 242 to 246 contribute to the cyanocob(III)alamin site; that span reads DWFER. An intrachain disulfide couples C183 to C259.

This sequence belongs to the BtuF family. In terms of assembly, the complex is composed of two ATP-binding proteins (BtuD), two transmembrane proteins (BtuC) and a solute-binding protein (BtuF).

It is found in the periplasm. Its function is as follows. Part of the ABC transporter complex BtuCDF involved in vitamin B12 import. Binds vitamin B12 and delivers it to the periplasmic surface of BtuC. This Salmonella typhi protein is Vitamin B12-binding protein.